Reading from the N-terminus, the 247-residue chain is Germin-like protein 9-1 (247 aa).

A signal peptide spans 1 to 25 (MMMSSRSSVSLGVLLLLAVILSAGA). The Cupin type-1 domain maps to 53-201 (KNLVTGNSGD…SMHTDQATVD (149 aa)). Residues His100, His102, and Glu107 each contribute to the Mn(2+) site. Asn126 is a glycosylation site (N-linked (GlcNAc...) asparagine). Position 148 (His148) interacts with Mn(2+). Residue Asn153 is glycosylated (N-linked (GlcNAc...) asparagine).

It belongs to the germin family. Oligomer (believed to be a pentamer but probably hexamer).

Its subcellular location is the secreted. It localises to the extracellular space. The protein resides in the apoplast. In terms of biological role, may play a role in plant defense. Probably has no oxalate oxidase activity even if the active site is conserved. The polypeptide is Germin-like protein 9-1 (Oryza sativa subsp. japonica (Rice)).